The chain runs to 333 residues: Phenylalanine--tRNA ligase alpha subunit (333 aa).

Position 254 (glutamate 254) interacts with Mg(2+).

This sequence belongs to the class-II aminoacyl-tRNA synthetase family. Phe-tRNA synthetase alpha subunit type 1 subfamily. In terms of assembly, tetramer of two alpha and two beta subunits. Requires Mg(2+) as cofactor.

It localises to the cytoplasm. The enzyme catalyses tRNA(Phe) + L-phenylalanine + ATP = L-phenylalanyl-tRNA(Phe) + AMP + diphosphate + H(+). This Xylella fastidiosa (strain M12) protein is Phenylalanine--tRNA ligase alpha subunit.